A 185-amino-acid chain; its full sequence is Coordinator of PRMT5 and differentiation stimulator (185 aa).

An N-acetylmethionine modification is found at methionine 1. A disordered region spans residues 1–109; the sequence is MDPPTAGAQS…MSGCLPKEQA (109 aa). Composition is skewed to basic and acidic residues over residues 42–52 and 66–77; these read SSQEKATENAT and SPAHGEGTHCEE. Residue serine 66 is modified to Phosphoserine. The segment covering 78 to 89 has biased composition (acidic residues); sequence EGFAEDDEDSDG.

As to quaternary structure, interacts with PRMT5. Interacts with histone H4; specifically interacts with the N-terminus of histone H4 but not with histone H3. Interacts with CBFB. Found in a complex with PRMT5, RUNX1 and CBFB.

It is found in the nucleus. Histone-binding protein required for histone H4 methyltransferase activity of PRMT5. Specifically required for histone H4 'Arg-3' methylation mediated by PRMT5, but not histone H3 'Arg-8' methylation, suggesting that it modulates the substrate specificity of PRMT5. Specifically interacts with the N-terminus of histone H4 but not with histone H3, suggesting that it acts by promoting the association between histone H4 and PRMT5. Involved in CCNE1 promoter repression. Plays a role in muscle cell differentiation by modulating the recruitment of PRMT5 to the promoter of genes involved in the coordination between cell cycle exit and muscle differentiation. This chain is Coordinator of PRMT5 and differentiation stimulator (COPRS), found in Bos taurus (Bovine).